Here is a 305-residue protein sequence, read N- to C-terminus: Autophagy-related protein 14 (305 aa).

Residues 34–147 (KMNLLILRQE…LDTLSHILAR (114 aa)) adopt a coiled-coil conformation.

This sequence belongs to the ATG14 family. In terms of assembly, component of the autophagy-specific VPS34 PI3-kinase complex I.

The protein localises to the preautophagosomal structure membrane. It localises to the vacuole membrane. Functionally, required for cytoplasm to vacuole transport (Cvt) and autophagy as a part of the autophagy-specific VPS34 PI3-kinase complex I. This complex is essential to recruit the ATG8-phosphatidylinositol conjugate and the ATG12-ATG5 conjugate to the pre-autophagosomal structure. ATG14 mediates the specific binding of the VPS34 PI3-kinase complex I to the preautophagosomal structure (PAS). The polypeptide is Autophagy-related protein 14 (Kluyveromyces marxianus (strain DMKU3-1042 / BCC 29191 / NBRC 104275) (Yeast)).